A 156-amino-acid polypeptide reads, in one-letter code: Cytochrome c-type biogenesis protein CcmE 1 (156 aa).

The Cytoplasmic segment spans residues 1–8 (MNATRRQR). The helical; Signal-anchor for type II membrane protein transmembrane segment at 9-29 (LWWVICVLTAAALAVTLIVFA) threads the bilayer. Topologically, residues 30–156 (LQRNMSYLFT…ATATPLTAPR (127 aa)) are periplasmic. Heme is bound by residues His123 and Tyr127. Residues 137–156 (AEGHAGKPIPATATPLTAPR) form a disordered region. Over residues 146 to 156 (PATATPLTAPR) the composition is skewed to low complexity.

This sequence belongs to the CcmE/CycJ family.

It is found in the cell inner membrane. Its function is as follows. Heme chaperone required for the biogenesis of c-type cytochromes. Transiently binds heme delivered by CcmC and transfers the heme to apo-cytochromes in a process facilitated by CcmF and CcmH. In Xanthomonas euvesicatoria pv. vesicatoria (strain 85-10) (Xanthomonas campestris pv. vesicatoria), this protein is Cytochrome c-type biogenesis protein CcmE 1.